The following is a 425-amino-acid chain: Serine--tRNA ligase (425 aa).

230–232 (TAE) is an L-serine binding site. 261 to 263 (RSE) lines the ATP pocket. An L-serine-binding site is contributed by Glu-284. An ATP-binding site is contributed by 348-351 (EISS). Position 384 (Ser-384) interacts with L-serine.

This sequence belongs to the class-II aminoacyl-tRNA synthetase family. Type-1 seryl-tRNA synthetase subfamily. As to quaternary structure, homodimer. The tRNA molecule binds across the dimer.

It localises to the cytoplasm. It carries out the reaction tRNA(Ser) + L-serine + ATP = L-seryl-tRNA(Ser) + AMP + diphosphate + H(+). The enzyme catalyses tRNA(Sec) + L-serine + ATP = L-seryl-tRNA(Sec) + AMP + diphosphate + H(+). It functions in the pathway aminoacyl-tRNA biosynthesis; selenocysteinyl-tRNA(Sec) biosynthesis; L-seryl-tRNA(Sec) from L-serine and tRNA(Sec): step 1/1. Catalyzes the attachment of serine to tRNA(Ser). Is also able to aminoacylate tRNA(Sec) with serine, to form the misacylated tRNA L-seryl-tRNA(Sec), which will be further converted into selenocysteinyl-tRNA(Sec). The chain is Serine--tRNA ligase from Streptococcus pyogenes serotype M1.